The chain runs to 213 residues: Thiopurine S-methyltransferase (213 aa).

The S-adenosyl-L-methionine site is built by Trp-10, Met-45, Glu-66, and Arg-120.

This sequence belongs to the class I-like SAM-binding methyltransferase superfamily. TPMT family.

Its subcellular location is the cytoplasm. It carries out the reaction S-adenosyl-L-methionine + a thiopurine = S-adenosyl-L-homocysteine + a thiopurine S-methylether.. This Photobacterium profundum (strain SS9) protein is Thiopurine S-methyltransferase.